The sequence spans 363 residues: Galanin receptor 2a (363 aa).

Residues 1–23 are Extracellular-facing; that stretch reads MNASQQIHVFSSHWKVESVIISL. A helical transmembrane segment spans residues 24-44; that stretch reads IFSMIFLVGTVGNCLVLAVLI. The Cytoplasmic segment spans residues 45 to 54; sequence RNGQMNTKST. A helical membrane pass occupies residues 55–75; the sequence is NLFILNLGLADLCFIVFCVPL. Topologically, residues 76–94 are extracellular; sequence QATIYTMDEWVFGAFVCKA. A disulfide bond links Cys-92 and Cys-169. The helical transmembrane segment at 95-115 threads the bilayer; it reads VHFIIYLTMYASIFTLAAVSL. The Cytoplasmic portion of the chain corresponds to 116–135; sequence DRYLAIRYPLRSRETRTPRN. The helical transmembrane segment at 136–156 threads the bilayer; the sequence is ALTSISLVWALSLFFSSPYLS. Topologically, residues 157 to 179 are extracellular; the sequence is YYQQMDLDGTTVCIPAWSVHHRQ. A helical transmembrane segment spans residues 180–200; that stretch reads AMDICTFIFGYLIPVLILGIT. The Cytoplasmic portion of the chain corresponds to 201-230; sequence YARTIRYLWTSVDPMQDMSESRKAKRKVTK. The chain crosses the membrane as a helical span at residues 231–251; it reads MIIIVAVLFCLCWLPHHLVIL. Topologically, residues 252-268 are extracellular; sequence CMWFGHFPLNHTTYVLR. Residues 269–289 traverse the membrane as a helical segment; the sequence is ILSHLVAYANSCLNPIVYALV. Residues 290-363 are Cytoplasmic-facing; sequence SKHFRKGFKK…TSAFMTFNVT (74 aa).

This sequence belongs to the G-protein coupled receptor 1 family. As to expression, expressed in neurons in the ventral area of the interpeduncular nucleus (IPN) where expression often overlaps with spx1.

Its subcellular location is the membrane. Receptor for the hormone galanin. Receptor for the hormones spexin-1 and spexin-2. This is Galanin receptor 2a from Danio rerio (Zebrafish).